Reading from the N-terminus, the 125-residue chain is UPF0231 protein APP7_1023 (125 aa).

It belongs to the UPF0231 family.

In Actinobacillus pleuropneumoniae serotype 7 (strain AP76), this protein is UPF0231 protein APP7_1023.